A 227-amino-acid polypeptide reads, in one-letter code: KH domain-containing protein MJ0443 (227 aa).

2 consecutive KH domains span residues 14-77 and 106-163; these read KSIE…RDIV and DYAS…KEAV.

In Methanocaldococcus jannaschii (strain ATCC 43067 / DSM 2661 / JAL-1 / JCM 10045 / NBRC 100440) (Methanococcus jannaschii), this protein is KH domain-containing protein MJ0443.